A 953-amino-acid polypeptide reads, in one-letter code: Anion exchange protein 4 (953 aa).

A disordered region spans residues 20–41 (SEQLDGDLGPGSGLDGPSDIDN). The next 4 membrane-spanning stretches (helical) occupy residues 385-405 (AVLY…GLLG), 413-433 (GVLE…LMAG), 470-490 (VGIW…SLLV), and 501-521 (FCAL…LNLI). Residues 385-953 (AVLYIYLATV…KAPEINISVN (569 aa)) are membrane (anion exchange). N-linked (GlcNAc...) asparagine glycosylation is found at Asn-546 and Asn-570. Helical transmembrane passes span 594-614 (VPDI…CAIA), 635-655 (FSSV…GLAT), 682-702 (PWWL…LIFM), 728-748 (LFCV…WYVS), 785-805 (GLVV…LKFI), 807-827 (MPVL…SMQF), and 869-889 (LWVI…LGLV). Positions 916–927 (KTIPENRPEPEH) are enriched in basic and acidic residues. The segment at 916–938 (KTIPENRPEPEHLFSGNDSENSE) is disordered. Asn-932 and Asn-949 each carry an N-linked (GlcNAc...) asparagine glycan.

The protein belongs to the anion exchanger (TC 2.A.31) family. Expressed in kidney and gastrointestinal tract. In kidney, it is highly expressed in the cortex, expressed at intermediate level in the outer medulla and not expressed in the inner medulla. It is expressed in the cecum, while it is absent in other segments of gastrointestinal tract. Highly expressed in the cortical collecting duct (CCD). Expressed in both alpha-intercalated cells and beta-intercalated cells in the CCD (at protein level).

The protein resides in the basolateral cell membrane. The catalysed reaction is 2 hydrogencarbonate(out) + chloride(in) + Na(+)(out) = 2 hydrogencarbonate(in) + chloride(out) + Na(+)(in). It carries out the reaction K(+)(in) + 2 hydrogencarbonate(in) + chloride(out) = K(+)(out) + 2 hydrogencarbonate(out) + chloride(in). It catalyses the reaction Li(+)(in) + 2 hydrogencarbonate(in) + chloride(out) = Li(+)(out) + 2 hydrogencarbonate(out) + chloride(in). The enzyme catalyses Rb(+)(in) + 2 hydrogencarbonate(in) + chloride(out) = Rb(+)(out) + 2 hydrogencarbonate(out) + chloride(in). The catalysed reaction is Cs(+)(in) + 2 hydrogencarbonate(in) + chloride(out) = Cs(+)(out) + 2 hydrogencarbonate(out) + chloride(in). 4,4'-diisothiocyanatodihydrostilbene-2,2'- disulfonic acid (H2DIDS) potently inhibits chloride/hydrogencarbonate antiporter activity with 50% inhibition at about 5 uM. Completely inhibits chloride/hydrogencarbonate antiporter activity at 200 uM of 4,4'-diisothiocyano-trans-stilbene-2,2'-disulfonic acid (DIDS). Electroneutral Cl(-)/HCO3(-) antiporter that favors chloride ion entry and efflux of hydrogencarbonate and sodium ion across the basolateral membrane and may participate in salivary secretion. Also mediates Cl(-)/HCO3(-) exchange activity in the presence of K(+) as well as Cs(+), Li(+), and Rb(+). Does not contribute to Cl(-)/HCO3(-) exchanger in the apical membrane of the upper villous epithelium. This is Anion exchange protein 4 from Rattus norvegicus (Rat).